Consider the following 92-residue polypeptide: Small ribosomal subunit protein uS19 (92 aa).

This sequence belongs to the universal ribosomal protein uS19 family.

Its function is as follows. Protein S19 forms a complex with S13 that binds strongly to the 16S ribosomal RNA. This is Small ribosomal subunit protein uS19 from Xanthobacter autotrophicus (strain ATCC BAA-1158 / Py2).